Reading from the N-terminus, the 451-residue chain is UPF0210 protein CA_C0479 (451 aa).

This sequence belongs to the UPF0210 family. Homodimer.

The chain is UPF0210 protein CA_C0479 from Clostridium acetobutylicum (strain ATCC 824 / DSM 792 / JCM 1419 / IAM 19013 / LMG 5710 / NBRC 13948 / NRRL B-527 / VKM B-1787 / 2291 / W).